The chain runs to 288 residues: Light-independent protochlorophyllide reductase iron-sulfur ATP-binding protein (288 aa).

Residues 10-15 (GIGKST) and K39 each bind ATP. S14 provides a ligand contact to Mg(2+). 2 residues coordinate [4Fe-4S] cluster: C95 and C129. 180-181 (NR) is an ATP binding site.

It belongs to the NifH/BchL/ChlL family. As to quaternary structure, homodimer. Protochlorophyllide reductase is composed of three subunits; ChlL, ChlN and ChlB. It depends on [4Fe-4S] cluster as a cofactor.

It carries out the reaction chlorophyllide a + oxidized 2[4Fe-4S]-[ferredoxin] + 2 ADP + 2 phosphate = protochlorophyllide a + reduced 2[4Fe-4S]-[ferredoxin] + 2 ATP + 2 H2O. It participates in porphyrin-containing compound metabolism; chlorophyll biosynthesis (light-independent). Its function is as follows. Component of the dark-operative protochlorophyllide reductase (DPOR) that uses Mg-ATP and reduced ferredoxin to reduce ring D of protochlorophyllide (Pchlide) to form chlorophyllide a (Chlide). This reaction is light-independent. The L component serves as a unique electron donor to the NB-component of the complex, and binds Mg-ATP. This Trichodesmium erythraeum (strain IMS101) protein is Light-independent protochlorophyllide reductase iron-sulfur ATP-binding protein.